Here is a 367-residue protein sequence, read N- to C-terminus: Aurora kinase (367 aa).

Residues 30–49 (TTATNGAPPQARVQPGKGYR) form a disordered region. The Protein kinase domain maps to 109 to 360 (FEIGKVLGKG…LKEVKKHPWI (252 aa)). ATP contacts are provided by residues 115–123 (LGKGKFGRV) and Lys-138. The active-site Proton acceptor is the Asp-232.

Belongs to the protein kinase superfamily. Ser/Thr protein kinase family. Aurora subfamily.

It localises to the nucleus. Its subcellular location is the cytoplasm. It is found in the cytoskeleton. The protein localises to the spindle. The protein resides in the chromosome. It localises to the centromere. Its subcellular location is the kinetochore. The catalysed reaction is L-seryl-[protein] + ATP = O-phospho-L-seryl-[protein] + ADP + H(+). It catalyses the reaction L-threonyl-[protein] + ATP = O-phospho-L-threonyl-[protein] + ADP + H(+). Functionally, component of the chromosomal passenger complex (CPC), a complex that acts as a key regulator of chromosome segregation and cytokinesis. Has a role in error-correction of aberrent kinetochore-microtubule attachments to ensure that sister kinetochores become bioriented and connect to opposite poles by promoting spindle assembly checkpoint signaling. The sequence is that of Aurora kinase (IPL1) from Eremothecium gossypii (strain ATCC 10895 / CBS 109.51 / FGSC 9923 / NRRL Y-1056) (Yeast).